Here is a 464-residue protein sequence, read N- to C-terminus: Zinc transporter 6 (464 aa).

Over Met-1–Lys-33 the chain is Cytoplasmic. A helical membrane pass occupies residues Ile-34–Ser-54. Residues Thr-55–Thr-64 lie on the Extracellular side of the membrane. A helical transmembrane segment spans residues Tyr-65 to Met-85. The Cytoplasmic segment spans residues Lys-86–Arg-98. A helical transmembrane segment spans residues Phe-99–Leu-119. Residues Lys-120–Thr-134 are Extracellular-facing. Residues Gly-135–Ile-155 form a helical membrane-spanning segment. Over Arg-156–Pro-200 the chain is Cytoplasmic. A helical membrane pass occupies residues Phe-201 to Ile-221. Residues Asn-222–Asp-228 are Extracellular-facing. Residues Thr-229–Tyr-249 traverse the membrane as a helical segment. Residues Ser-250 to Gln-464 are Cytoplasmic-facing.

It belongs to the cation diffusion facilitator (CDF) transporter (TC 2.A.4) family. SLC30A subfamily. In terms of assembly, heterodimer with SLC30A5; form a functional zinc ion transmembrane transporter.

Its subcellular location is the golgi apparatus. It localises to the trans-Golgi network membrane. Functionally, has probably no intrinsic transporter activity but together with SLC30A5 forms a functional zinc ion:proton antiporter heterodimer, mediating zinc entry into the lumen of organelles along the secretory pathway. As part of that zinc ion:proton antiporter, contributes to zinc ion homeostasis within the early secretory pathway and regulates the activation and folding of enzymes like alkaline phosphatases and enzymes involved in phosphatidylinositol glycan anchor biosynthesis. This is Zinc transporter 6 (slc30a6) from Xenopus tropicalis (Western clawed frog).